The following is a 203-amino-acid chain: Outer-membrane lipoprotein carrier protein (203 aa).

A signal peptide spans 1–21 (MKKLLVACCLLSGFASTSVLA).

This sequence belongs to the LolA family. In terms of assembly, monomer.

Its subcellular location is the periplasm. In terms of biological role, participates in the translocation of lipoproteins from the inner membrane to the outer membrane. Only forms a complex with a lipoprotein if the residue after the N-terminal Cys is not an aspartate (The Asp acts as a targeting signal to indicate that the lipoprotein should stay in the inner membrane). This Serratia proteamaculans (strain 568) protein is Outer-membrane lipoprotein carrier protein.